Here is a 2772-residue protein sequence, read N- to C-terminus: MDYIRPLRVFSFPHVNNTLEYVRYNKANGDVGAFLTTMKFIGNVKLSDFTPRCAAMIYIGKLTKGVKRTFVPPPVKGFARQYAVVSGSVSALRGDGKKVLMEARTSTSATSDVSDFDVVFEAVSNALLVVHYHRVVPYAPVKREQPKPAVKQDEQKPKRQASHWAVKPTAVGVHVPLPKKQEALEPAQSVPQQSLEEKAALTFGLFFSKGGGDESDAVILRKGKLFNRALNVPIDVKNTFVWAKIWDEASRRRGYFYVKDRAVKFFPIVRGRATIEDFIVNTAPGCDVALPRIELWSMRERAFVCTTKGWCWFNNERLRGEIYRRRCFSSSFSIGFLMHLGFRSLKVIRFAGTNILHMPSLNEERTFGWKGGDVYLPNVPKTAIVAGDRTRLGGEILASVANALNQEEVYSSVVSSITNRLVLRDQSALLSHLDTKLCDMFSQRDAMIREKPSHRCDVFLKPREREKLRELFPELSIQFSDSVRSSHPFANAMRSCFNGIFSRRCGNVCFFDIGGSFTYHVKAGHVNCHVCNPVLDVKDVKRRINEILFLSTAGGDSYVSSDLLTEAASKSVSYCSRESQNCDSRADAGFMVDVYDISPQQVAEAMDKKGALVFDIALMFPVELLYGNGEVYLEELDTLVKREGDYLAYNVGQCGEMYEHSFSNVSGFFTFSYVRTSSGNVFKLEYEGYRCGYHHLTMCRAQKSPGTEVTYRSLVPSFVGKSLVFIPVVAGSSVSFKTIVLDSDFVDRIYSYALNTIGTFENRTFEYAVGAVRSQKTHVITGSRVVHSKVDISPDDMWGLVVAVMAQAIKDRAKSIRSYNFIKASEGSLAGVFKLFFQTVGDCFSNAVSVYAKAMVHDNFNVLETLMSMPRAFIRKVPGSVVVTICTSGASDRLELRGAFDISKETFGRKLKNSRLRVFSRAIVEDSIKVMKAMKTEDGKPLPITEDSVYAFIMGNVSNVHCTRAGLLGGSKATVVSSVSKGLVARGAATKAFSGITSFFSTGSLFYDRGLTEDERLDALVRTENAINSPVGILETSRVAVSKVVAGTKEFWSEVSLNDFTTFVLRNKVLIGIFVASLGAAPIAWKYRRGIAANARRYAGSSYETLSSLSSQAAGGLRGLTSSTVSGGSLVVRRGFSSAVTVTRATVAKRQVPLALLSFSTSYAISGCSMLGIWAHALPRHLMFFFGLGTLLGARASANTWKFGGFSNNWCAVPEVVWRGKSVSSLLLPITLGVSLIIRGLLNDTIPQLAYVPPVEGRNVYDETLRYYRDFDYDEGAGPSGTQHEAVPGDDNDGSTSSVSSYDVVTNVRDVGISTNGEVTGEEETHSPRSVQYTYVEEEVAPSAAVAERQGDPSGSGTADAMAFVESVKKGVDDVFHQQSSGETAREVEVDGKGLLPESVVGEAPTQERGRAADGNTAQTAVNEGDREPVQSSLVSSPQADIPKVTQSEVHAQKEVKQEVPLATVSGATPIVDEKPAPSVTTRGVKIIDKGKAVAHVAEKKQVQVEQPKQRSLTINEGKAGKQLCMFRTCSCGVQLDVYNEATIATRFSNAFTFVDNLKGRSAVFFSKLGEGYTYNGGSHVSSGWPRALEDILTAIKYPSVFDHCLVQKYKMGGGVPFHADDEECYPSDNPILTVNLVGKANFSTKCRKGGKVMVINVASGDYFLMPCGFQRTHLHSVNSIDEGRISLTFRATRRVFGVGRMLQLAGGVSDEKSPGVPNQQPQSQGATRTITPKSGGKALSEGSGREVKGRSTYSIWCEQDYVRKCEWLRADNPVMALEPDYTPMTFEVVKTGTSEDAVVEYLKYLAIGIERTYRALLMARNIAVTTAEGVLKVPNQVYESLPGFHVYKSGTDLIFHSTQDGLRVRDLPYVLIAEKGIFTKGKDVDAVVALGDNLFVCDDILVFHDAINLIGALKVARCGMVGESFKSFEYKCYNAPPGGGKTTTLVDEFVKSPNSTATITANVGSSEDINMAVKKRDPNLEGLNSATTVNSRVVNFIVRGMYKRVLVDEVHMMHQGLLQLGVFATGASEGLFFGDINQIPFINREKVFRMDCAVFVPKKESVVYTSKSYRCPLDVCYLLSSMTVRGTEKCYPEKVVSGKDKPVVRSLSKRPIGTTDDVAEINADVYLCMTQLEKSDMKRSLKGKGKETPVMTVHEAQGKTFSDVVLFRTKKADDSLFTKQPHILVGLSRHTRSLVYAALSSKLDDKVGTYISDASPQSVSDALLTRSPRLVAFEVYERMNFGPTFEGELVRKIPTSHFVAVNGFLEDLLDGCPAFDYDFFEDDFETSDQSFLIEDVRISESFSHFTSKIEDRFYSFIRSSVGLPKRNTLKCNLVTFENRNFNADRGCNVGCDDSVAHELKEIFFEEVVNKARLAEVTESHLSSNTMLLSDWLDKRAPNAYKSLKRALGSFVFHPSMLTSYTLMVKADVKPKLDNTPLSKYVTGQNIVYHDRCVTALFSCIFTACVERLKYVVDERWLFYHGMDTAELAAALRNNLGDIRQYYTYELDISKYDKSQSALMKQVEELILLTLGVDREVLSTFFCGEYDSVVRTMTKELVLSVGSQRRSGGANTWLGNSLVLCTLLSVVLRGLDYSYIVVSGDDSLIFSRQPLDIDTSVLSDNFGFDVKIFNQAAPYFCSKFLVQVEDSLFFVPDPLKLFVKFGASKTSDIDLLHEIFQSFVDLSKGFNREDVIQELAKLVTRKYKHSGWTYSALCVLHVLSANFSQFCRLYYHNSVNLDVRPIQRTESLSLLALKARILRWKASRFAFSIKRG.

Over residues 143-157 the composition is skewed to basic and acidic residues; it reads REQPKPAVKQDEQKP. Residues 143-163 are disordered; that stretch reads REQPKPAVKQDEQKPKRQASH. Active-site for leader protease activity residues include cysteine 311 and histidine 357. The Alphavirus-like MT domain occupies 478-669; sequence QFSDSVRSSH…HSFSNVSGFF (192 aa). Disordered regions lie at residues 1277–1301 and 1400–1442; these read AGPS…SVSS and VVGE…QADI. The segment covering 1430–1442 has biased composition (polar residues); that stretch reads VQSSLVSSPQADI. The 94-residue stretch at 1601–1694 folds into the Fe2OG dioxygenase domain; it reads VFDHCLVQKY…RISLTFRATR (94 aa). Positions 1619, 1621, and 1676 each coordinate Fe cation. Residue arginine 1685 coordinates 2-oxoglutarate. Residues 1708-1746 form a disordered region; sequence GVSDEKSPGVPNQQPQSQGATRTITPKSGGKALSEGSGR. Over residues 1717–1733 the composition is skewed to polar residues; it reads VPNQQPQSQGATRTITP. Positions 1902–2066 constitute a (+)RNA virus helicase ATP-binding domain; sequence LVFHDAINLI…VPKKESVVYT (165 aa). A (+)RNA virus helicase C-terminal domain is found at 2067 to 2233; the sequence is SKSYRCPLDV…LLTRSPRLVA (167 aa). Residues 2502–2615 form the RdRp catalytic domain; that stretch reads YYTYELDISK…FSRQPLDIDT (114 aa).

This sequence belongs to the ssRNA positive-strand viruses RNA-directed RNA polymerase family. It depends on Fe(2+) as a cofactor.

The enzyme catalyses RNA(n) + a ribonucleoside 5'-triphosphate = RNA(n+1) + diphosphate. The catalysed reaction is ATP + H2O = ADP + phosphate + H(+). Functionally, RNA-dependent RNA polymerase replicates the viral genome. The protein is Replicase polyprotein 1ab of Grapevine leafroll-associated virus 3 (isolate United States/NY1) (GLRaV-3).